The chain runs to 212 residues: Protein RER1C (212 aa).

Met1 bears the N-acetylmethionine mark. A run of 4 helical transmembrane segments spans residues 55–75 (TVPH…IYIV), 82–102 (GFYI…IAFL), 135–155 (EFKF…MTFF), and 157–177 (VFDV…LFFL).

Belongs to the RER1 family.

It is found in the membrane. Its function is as follows. Involved in the retrieval of endoplasmic reticulum membrane proteins from the early Golgi compartment. The polypeptide is Protein RER1C (RER1C) (Arabidopsis thaliana (Mouse-ear cress)).